Reading from the N-terminus, the 123-residue chain is Glucose starvation-inducible protein B (123 aa).

Basic and acidic residues-rich tracts occupy residues 1 to 29 and 41 to 109; these read MADN…KEFY and SKNH…KEFY. The disordered stretch occupies residues 1–123; it reads MADNNKMSRE…SKGGNARNND (123 aa). A run of 5 repeats spans residues 13–32, 33–52, 53–72, 73–92, and 93–112. Positions 13-120 are 5 X 20 AA approximate tandem repeats; it reads GRKGGETTSK…EIGSKGGNAR (108 aa).

Functionally, involved in an adaptive response to nutrient deprivation other than sporulation. In Bacillus subtilis (strain 168), this protein is Glucose starvation-inducible protein B (gsiB).